The following is a 439-amino-acid chain: Ribosomal protein uS12 methylthiotransferase RimO (439 aa).

Residues 5–115 form the MTTase N-terminal domain; the sequence is PKIGFVSLGC…LIEAVHTHAP (111 aa). Residues cysteine 14, cysteine 50, cysteine 79, cysteine 146, cysteine 150, and cysteine 153 each contribute to the [4Fe-4S] cluster site. One can recognise a Radical SAM core domain in the interval 132 to 369; the sequence is LTPRHYSYLK…MGLQAQISTD (238 aa). Residues 372–439 form the TRAM domain; the sequence is QRFVGTEQQV…ESTEYDLIAD (68 aa).

Belongs to the methylthiotransferase family. RimO subfamily. [4Fe-4S] cluster serves as cofactor.

Its subcellular location is the cytoplasm. It catalyses the reaction L-aspartate(89)-[ribosomal protein uS12]-hydrogen + (sulfur carrier)-SH + AH2 + 2 S-adenosyl-L-methionine = 3-methylsulfanyl-L-aspartate(89)-[ribosomal protein uS12]-hydrogen + (sulfur carrier)-H + 5'-deoxyadenosine + L-methionine + A + S-adenosyl-L-homocysteine + 2 H(+). Catalyzes the methylthiolation of an aspartic acid residue of ribosomal protein uS12. This chain is Ribosomal protein uS12 methylthiotransferase RimO, found in Francisella tularensis subsp. novicida (strain U112).